Here is a 100-residue protein sequence, read N- to C-terminus: Urease subunit gamma (100 aa).

This sequence belongs to the urease gamma subunit family. Heterotrimer of UreA (gamma), UreB (beta) and UreC (alpha) subunits. Three heterotrimers associate to form the active enzyme.

It localises to the cytoplasm. The catalysed reaction is urea + 2 H2O + H(+) = hydrogencarbonate + 2 NH4(+). The protein operates within nitrogen metabolism; urea degradation; CO(2) and NH(3) from urea (urease route): step 1/1. This chain is Urease subunit gamma, found in Paraburkholderia xenovorans (strain LB400).